The chain runs to 412 residues: Adherens junction-associated protein 1 (412 aa).

The signal sequence occupies residues 1–43 (MWIQQLLGLSSMSIRWPGRSLGSHAWILIAMLQLAVDFPSCDS). Residues 44–284 (LGPGPEFRLL…GETSGLAVHQ (241 aa)) lie on the Extracellular side of the membrane. Disordered stretches follow at residues 62–175 (LWSL…GRPT) and 243–271 (DPWKRTPVGVSTTEPSTSPSSNGKDIQPP). Over residues 121-146 (PPAATRSSPSLASATASSSIVTAGAA) the composition is skewed to low complexity. The span at 160 to 171 (HDTEFNDFDFRG) shows a compositional bias: basic and acidic residues. Residues 248–263 (TPVGVSTTEPSTSPSS) are compositionally biased toward low complexity. Residues 285–305 (IITITVSLIMVIAALITTLVL) traverse the membrane as a helical segment. Residues 305-412 (LKNCCAPSGH…VSEKWFEISC (108 aa)) are targeting signals. The Cytoplasmic segment spans residues 306-412 (KNCCAPSGHT…VSEKWFEISC (107 aa)).

Forms a complex with CDH1 and CTNNB1; interacts directly with CTNNB1. Interacts with AP1M2 and isoform 2 of BSG/CD147.

It is found in the basolateral cell membrane. Its subcellular location is the apical cell membrane. The protein resides in the cell junction. It localises to the adherens junction. Functionally, plays a role in cell adhesion and cell migration. The sequence is that of Adherens junction-associated protein 1 (Ajap1) from Mus musculus (Mouse).